The following is a 157-amino-acid chain: MGIINIILTLIEDMILAAIPAVGFAMVFNVPLRALKYCALLGAIGHGSRTVLMISGMNIEWASFCAAILVGCIGIQWSRWWLAHPKVFTVAAIIPMFPGINAYVAMISVVKLTQIGYSEEIFEALVTNFLKASFIVGALSIGLSLPGLWLYRKRPSV.

A run of 4 helical transmembrane segments spans residues 6-26, 51-71, 87-107, and 129-149; these read IILT…GFAM, VLMI…ILVG, VFTV…VAMI, and FLKA…PGLW.

It belongs to the ThrE exporter (TC 2.A.79) family. As to quaternary structure, the transporter is composed of YjjB and YjjP.

The protein localises to the cell inner membrane. Functionally, involved in succinate export with YjjP. Both proteins are required for export. The sequence is that of Probable succinate transporter subunit YjjB from Proteus mirabilis (strain HI4320).